The chain runs to 591 residues: Aspartate--tRNA(Asp/Asn) ligase (591 aa).

Position 175 (Glu-175) interacts with L-aspartate. The segment at 199-202 (QQFK) is aspartate. L-aspartate is bound by residues Arg-221 and His-453. 221–223 (RDE) contacts ATP. Glu-486 is a binding site for ATP. Arg-493 contacts L-aspartate. Position 538 to 541 (538 to 541 (GIDR)) interacts with ATP.

Belongs to the class-II aminoacyl-tRNA synthetase family. Type 1 subfamily. Homodimer.

It localises to the cytoplasm. The enzyme catalyses tRNA(Asx) + L-aspartate + ATP = L-aspartyl-tRNA(Asx) + AMP + diphosphate. In terms of biological role, aspartyl-tRNA synthetase with relaxed tRNA specificity since it is able to aspartylate not only its cognate tRNA(Asp) but also tRNA(Asn). Reaction proceeds in two steps: L-aspartate is first activated by ATP to form Asp-AMP and then transferred to the acceptor end of tRNA(Asp/Asn). The polypeptide is Aspartate--tRNA(Asp/Asn) ligase (Cereibacter sphaeroides (strain KD131 / KCTC 12085) (Rhodobacter sphaeroides)).